Reading from the N-terminus, the 782-residue chain is Potassium transporter 6 (782 aa).

Residues 1 to 18 (MEIESGSYQNAKKESWRT) lie on the Cytoplasmic side of the membrane. A helical membrane pass occupies residues 19-39 (VLTLAYQSLGVVYGDLSISPL). The Extracellular segment spans residues 40 to 61 (YVYKSTFAEDIHHSESNEEIFG). Residues 62-82 (VLSFIFWTITLVPLLKYVFIV) form a helical membrane-spanning segment. The Cytoplasmic portion of the chain corresponds to 83-153 (LRADDNGEGG…TLEKHGVLQK (71 aa)). A helical membrane pass occupies residues 154–174 (ILLVLALIGTCMVIGDGVLTP). The Extracellular segment spans residues 175-195 (AISVFSAVSGVELSMSKEHHK). A helical membrane pass occupies residues 196-216 (YIELPAACVILIGLFALQHYG). Over 217 to 219 (THR) the chain is Cytoplasmic. Residues 220-240 (VGFLFAPVILLWLMCISAIGV) form a helical membrane-spanning segment. At 241–270 (YNIFHWNPHVYQALSPYYMYKFLKKTQSRG) the chain is on the extracellular side. The helical transmembrane segment at 271 to 291 (WMSLGGILLCITGSEAMFADL) threads the bilayer. The Cytoplasmic portion of the chain corresponds to 292 to 296 (GHFSQ). Residues 297 to 317 (LSIKIAFTSLVYPSLILAYMG) form a helical membrane-spanning segment. Residues 318–347 (QAAYLSQHHIIESEYNIGFYVSVPERLRWP) lie on the Extracellular side of the membrane. The chain crosses the membrane as a helical span at residues 348 to 368 (VLVIAILAAVVGSQAIITGTF). Over 369–395 (SIIKQCSALGCFPKVKIVHTSSKIHGQ) the chain is Cytoplasmic. Residues 396–416 (IYIPEINWILMVLCLAVTIGF) traverse the membrane as a helical segment. At 417–421 (RDTKR) the chain is on the extracellular side. The next 2 helical transmembrane spans lie at 422 to 442 (LGNA…CLMS) and 443 to 463 (LVIV…VVFF). Residues 464–474 (GTIESLYFSAS) lie on the Extracellular side of the membrane. A helical transmembrane segment spans residues 475–495 (LIKFLEGAWVPIALAFCFLLA). Over 496-782 (MCTWHYGTLK…TLEVGMIYNV (287 aa)) the chain is Cytoplasmic. Basic and acidic residues predominate over residues 664–675 (YESDIDDPDKPG). The segment at 664–693 (YESDIDDPDKPGTSEIRSPKPKKKSKSKVK) is disordered. Positions 682 to 693 (PKPKKKSKSKVK) are enriched in basic residues.

It belongs to the HAK/KUP transporter (TC 2.A.72.3) family.

The protein resides in the cell membrane. In terms of biological role, probable potassium transporter. This is Potassium transporter 6 (POT6) from Arabidopsis thaliana (Mouse-ear cress).